Consider the following 207-residue polypeptide: Oligoribonuclease (207 aa).

The Exonuclease domain maps to L8–L172. The active site involves Y129.

Belongs to the oligoribonuclease family.

Its subcellular location is the cytoplasm. In terms of biological role, 3'-to-5' exoribonuclease specific for small oligoribonucleotides. This chain is Oligoribonuclease, found in Leifsonia xyli subsp. xyli (strain CTCB07).